The chain runs to 226 residues: Fibrillarin-like rRNA/tRNA 2'-O-methyltransferase (226 aa).

S-adenosyl-L-methionine-binding positions include 85-86 (TT), 104-105 (EF), 129-130 (DA), and 149-152 (DVAQ).

Belongs to the methyltransferase superfamily. Fibrillarin family. As to quaternary structure, interacts with nop5. Component of box C/D small ribonucleoprotein (sRNP) particles that contain rpl7ae, FlpA and nop5, plus a guide RNA.

Functionally, involved in pre-rRNA and tRNA processing. Utilizes the methyl donor S-adenosyl-L-methionine to catalyze the site-specific 2'-hydroxyl methylation of ribose moieties in rRNA and tRNA. Site specificity is provided by a guide RNA that base pairs with the substrate. Methylation occurs at a characteristic distance from the sequence involved in base pairing with the guide RNA. This Thermococcus sibiricus (strain DSM 12597 / MM 739) protein is Fibrillarin-like rRNA/tRNA 2'-O-methyltransferase.